Consider the following 98-residue polypeptide: UPF0251 protein Sputw3181_3483 (98 aa).

Belongs to the UPF0251 family.

The polypeptide is UPF0251 protein Sputw3181_3483 (Shewanella sp. (strain W3-18-1)).